The chain runs to 178 residues: Crossover junction endodeoxyribonuclease RuvC (178 aa).

Residues Asp-18, Glu-78, and Asp-150 contribute to the active site. Residues Asp-18, Glu-78, and Asp-150 each contribute to the Mg(2+) site.

It belongs to the RuvC family. Homodimer which binds Holliday junction (HJ) DNA. The HJ becomes 2-fold symmetrical on binding to RuvC with unstacked arms; it has a different conformation from HJ DNA in complex with RuvA. In the full resolvosome a probable DNA-RuvA(4)-RuvB(12)-RuvC(2) complex forms which resolves the HJ. Mg(2+) is required as a cofactor.

The protein localises to the cytoplasm. The catalysed reaction is Endonucleolytic cleavage at a junction such as a reciprocal single-stranded crossover between two homologous DNA duplexes (Holliday junction).. In terms of biological role, the RuvA-RuvB-RuvC complex processes Holliday junction (HJ) DNA during genetic recombination and DNA repair. Endonuclease that resolves HJ intermediates. Cleaves cruciform DNA by making single-stranded nicks across the HJ at symmetrical positions within the homologous arms, yielding a 5'-phosphate and a 3'-hydroxyl group; requires a central core of homology in the junction. The consensus cleavage sequence is 5'-(A/T)TT(C/G)-3'. Cleavage occurs on the 3'-side of the TT dinucleotide at the point of strand exchange. HJ branch migration catalyzed by RuvA-RuvB allows RuvC to scan DNA until it finds its consensus sequence, where it cleaves and resolves the cruciform DNA. The polypeptide is Crossover junction endodeoxyribonuclease RuvC (Granulibacter bethesdensis (strain ATCC BAA-1260 / CGDNIH1)).